The sequence spans 648 residues: MEGAGYRVVFEKGGVYLHTSAKKYQDRDSLIAGVIRVVEKDNDVLLHWAPVEEAGDSTQILFSKKDSSGGDSCASEEEPTFDPGYEPDWAVISTVRPQLCHSEPTRGAEPSCPQGSWAFSVSLGELKSIRRSKPGLSWAYLVLVTQAGGSLPALHFHRGGTRALLRVLSRYLLLASSPQDSRLYLVFPHDSSALSNSFHHLQLFDQDSSNVVSRFLQDPYSTTFSSFSRVTNFFRGALQPQPEGAASDLPPPPDDEPEPGFEVISCVELGPRPTVERGPPVTEEEWARHVGPEGRLQQVPELKNRIFSGGLSPSLRREAWKFLLGYLSWEGTAEEHKAHIRKKTDEYFRMKLQWKSVSPEQERRNSLLHGYRSLIERDVSRTDRTNKFYEGPENPGLGLLNDILLTYCMYHFDLGYVQGMSDLLSPILYVIQNEVDAFWCFCGFMELVQGNFEESQETMKRQLGRLLLLLRVLDPLLCDFLDSQDSGSLCFCFRWLLIWFKREFPFPDVLRLWEVLWTGLPGPNLHLLVACAILDMERDTLMLSGFGSNEILKHINELTMKLSVEDVLTRAEALHRQLTACPELPHNVQEILGLAPPAEPHSPSPTASPLPLSPTRAPPTPPPSTDTAPQPDSSLEILPEEEDEGADS.

The required for interaction with OPTN stretch occupies residues 218 to 309 (DPYSTTFSSF…PELKNRIFSG (92 aa)). The tract at residues 240-259 (PQPEGAASDLPPPPDDEPEP) is disordered. The region spanning 310–520 (GLSPSLRREA…RLWEVLWTGL (211 aa)) is the Rab-GAP TBC domain. Positions 594 to 648 (LAPPAEPHSPSPTASPLPLSPTRAPPTPPPSTDTAPQPDSSLEILPEEEDEGADS) are disordered. Residues 597–624 (PAEPHSPSPTASPLPLSPTRAPPTPPPS) show a composition bias toward pro residues. Ser-602 and Ser-604 each carry phosphoserine. Thr-606 carries the phosphothreonine modification. Residue Ser-608 is modified to Phosphoserine. A Phosphothreonine modification is found at Thr-615. Low complexity predominate over residues 625–634 (TDTAPQPDSS). The segment covering 638–648 (LPEEEDEGADS) has biased composition (acidic residues).

Interacts with OPTN; this interaction mediates TBC1D17 transient association with Rab8.

The protein localises to the cytoplasmic vesicle. The protein resides in the autophagosome. It localises to the cytoplasm. Its subcellular location is the recycling endosome. Probable RAB GTPase-activating protein that inhibits RAB8A/B function. Reduces Rab8 recruitment to tubules emanating from the endocytic recycling compartment (ERC) and inhibits Rab8-mediated endocytic trafficking, such as that of transferrin receptor (TfR). Involved in regulation of autophagy. The sequence is that of TBC1 domain family member 17 from Homo sapiens (Human).